Reading from the N-terminus, the 431-residue chain is Enolase (431 aa).

Residue glutamine 163 participates in (2R)-2-phosphoglycerate binding. The active-site Proton donor is glutamate 205. Positions 242, 288, and 315 each coordinate Mg(2+). Positions 340, 369, 370, and 391 each coordinate (2R)-2-phosphoglycerate. The active-site Proton acceptor is the lysine 340.

It belongs to the enolase family. Requires Mg(2+) as cofactor.

It is found in the cytoplasm. It localises to the secreted. The protein localises to the cell surface. It carries out the reaction (2R)-2-phosphoglycerate = phosphoenolpyruvate + H2O. It participates in carbohydrate degradation; glycolysis; pyruvate from D-glyceraldehyde 3-phosphate: step 4/5. Catalyzes the reversible conversion of 2-phosphoglycerate (2-PG) into phosphoenolpyruvate (PEP). It is essential for the degradation of carbohydrates via glycolysis. This chain is Enolase, found in Bacillus mycoides (strain KBAB4) (Bacillus weihenstephanensis).